The primary structure comprises 375 residues: tRNA-specific 2-thiouridylase MnmA (375 aa).

ATP is bound by residues 8–15 (GLSGGVDS) and Met-34. Residues 104–106 (NPD) form an interaction with target base in tRNA region. Cys-109 functions as the Nucleophile in the catalytic mechanism. Cys-109 and Cys-205 are disulfide-bonded. Gly-133 is a binding site for ATP. An interaction with tRNA region spans residues 155-157 (KDQ). The active-site Cysteine persulfide intermediate is Cys-205. Positions 313 to 314 (RY) are interaction with tRNA.

This sequence belongs to the MnmA/TRMU family.

It localises to the cytoplasm. It catalyses the reaction S-sulfanyl-L-cysteinyl-[protein] + uridine(34) in tRNA + AH2 + ATP = 2-thiouridine(34) in tRNA + L-cysteinyl-[protein] + A + AMP + diphosphate + H(+). Catalyzes the 2-thiolation of uridine at the wobble position (U34) of tRNA, leading to the formation of s(2)U34. The chain is tRNA-specific 2-thiouridylase MnmA from Acholeplasma laidlawii (strain PG-8A).